An 889-amino-acid polypeptide reads, in one-letter code: Inter-alpha-trypsin inhibitor heavy chain H3 (889 aa).

The N-terminal stretch at 1–21 (MRTMWWPCLVLALLSGLETSG) is a signal peptide. A propeptide spanning residues 22–33 (FPRSPLQLLGKR) is cleaved from the precursor. The 130-residue stretch at 29-158 (LLGKRSLPEG…KVTFELTYEE (130 aa)) folds into the VIT domain. Residue asparagine 91 is glycosylated (N-linked (GlcNAc...) asparagine). The VWFA domain occupies 284-467 (NIVFVIDVSG…LQLQGFYEEV (184 aa)). Asparagine 580 is a glycosylation site (N-linked (GlcNAc...) asparagine). Aspartate 649 is modified (aspartate 1-(chondroitin 4-sulfate)-ester). The propeptide occupies 650–889 (PHFIIQIPGK…HTDYIVPSLF (240 aa)).

It belongs to the ITIH family. In terms of assembly, I-alpha-I plasma protease inhibitors are assembled from one or two heavy chains (HC) and one light chain, bikunin. Pre-alpha-inhibitor (P-alpha-I) is composed of ITIH3/HC3 and bikunin. Heavy chains are linked to bikunin via chondroitin 4-sulfate esterified to the alpha-carboxyl of the C-terminal aspartate after propeptide cleavage. In terms of tissue distribution, expressed in both liver and brain.

Its subcellular location is the secreted. May act as a carrier of hyaluronan in serum or as a binding protein between hyaluronan and other matrix protein, including those on cell surfaces in tissues to regulate the localization, synthesis and degradation of hyaluronan which are essential to cells undergoing biological processes. In Mus musculus (Mouse), this protein is Inter-alpha-trypsin inhibitor heavy chain H3 (Itih3).